The sequence spans 290 residues: Malonyl-[acyl-carrier protein] O-methyltransferase (290 aa).

This sequence belongs to the methyltransferase superfamily.

The enzyme catalyses malonyl-[ACP] + S-adenosyl-L-methionine = malonyl-[ACP] methyl ester + S-adenosyl-L-homocysteine. Its pathway is cofactor biosynthesis; biotin biosynthesis. In terms of biological role, converts the free carboxyl group of a malonyl-thioester to its methyl ester by transfer of a methyl group from S-adenosyl-L-methionine (SAM). It allows to synthesize pimeloyl-ACP via the fatty acid synthetic pathway. The chain is Malonyl-[acyl-carrier protein] O-methyltransferase from Gallionella capsiferriformans (strain ES-2) (Gallionella ferruginea capsiferriformans (strain ES-2)).